A 486-amino-acid polypeptide reads, in one-letter code: Differentially expressed in FDCP 8 homolog (486 aa).

The disordered stretch occupies residues 1 to 26 (MSSWCSSEDAHNQSSTPSTRSRKSSW). Phorbol-ester/DAG-type zinc fingers lie at residues 160–212 (GHEF…KRVC) and 393–459 (IHTV…SLNC).

It belongs to the DEF8 family.

This Caenorhabditis elegans protein is Differentially expressed in FDCP 8 homolog.